The following is a 90-amino-acid chain: UPF0297 protein lwe1516 (90 aa).

The protein belongs to the UPF0297 family.

The polypeptide is UPF0297 protein lwe1516 (Listeria welshimeri serovar 6b (strain ATCC 35897 / DSM 20650 / CCUG 15529 / CIP 8149 / NCTC 11857 / SLCC 5334 / V8)).